A 632-amino-acid polypeptide reads, in one-letter code: tRNA endonuclease VMS1 (632 aa).

The C2H2-type zinc-finger motif lies at 72-96; that stretch reads MRCSVCQMSFDSRNEQKAHYQTDYH. Positions 123–155 are disordered; sequence HGIKSEDENSGGEQTSSDHEESEEASDRDPDLQ. The 161-residue stretch at 232–392 folds into the VLRF1 domain; that stretch reads PMAISALFMV…KKAWCELSYL (161 aa). Glutamine 295 is an active-site residue. ANK repeat units lie at residues 470 to 500 and 504 to 530; these read LTPT…DPTI and LGRT…NLGE. 2 coiled-coil regions span residues 544–582 and 608–632; these read LSRE…QRFA and TDEQ…KKKY. Residues 578-589 are compositionally biased toward basic and acidic residues; it reads KQRFAKDAERGP. Residues 578–632 are disordered; it reads KQRFAKDAERGPGKKLTNIPSIQQQNLNSLTDEQRRRLMREQRARAAEERMKKKY. Over residues 595-608 the composition is skewed to polar residues; the sequence is NIPSIQQQNLNSLT. The segment covering 609 to 632 has biased composition (basic and acidic residues); sequence DEQRRRLMREQRARAAEERMKKKY.

Belongs to the ANKZF1/VMS1 family. As to quaternary structure, associates with 60S ribosomal subunit. Interacts with CDC48. Interacts with NPL4.

It is found in the cytoplasm. It localises to the mitochondrion. The protein resides in the endoplasmic reticulum membrane. Functionally, endonuclease that cleaves polypeptidyl-tRNAs downstream of the ribosome-associated quality control (RQC) pathway to release incompletely synthesized polypeptides for degradation. The RQC pathway disassembles aberrantly stalled translation complexes to recycle or degrade the constituent parts. VMS1 acts downstream disassembly of stalled ribosomes and specifically cleaves off the terminal 3'-CCA nucleotides universal to all tRNAs from polypeptidyl-tRNAs, releasing (1) ubiquitinated polypeptides from 60S ribosomal subunit for degradation by the ERAD pathway and (2) cleaved tRNAs for recycling. Component of an evolutionarily conserved system for ubiquitin-mediated mitochondria-associated protein degradation (MAD), which is necessary to maintain mitochondrial, cellular, and organismal viability. In Saccharomyces cerevisiae (strain ATCC 204508 / S288c) (Baker's yeast), this protein is tRNA endonuclease VMS1.